Reading from the N-terminus, the 373-residue chain is Glutamine synthetase (373 aa).

Alanine 2 bears the N-acetylalanine mark. The segment at 2 to 25 (ATSASSHLNKGIKQVYMALPQGDK) is required for glutamine-induced ubiquitination by CRL4(CRBN) and proteasomal degradation. An N6-acetyllysine mark is found at lysine 11 and lysine 14. In terms of domain architecture, GS beta-grasp spans 26–106 (VQAMYIWIDG…VFCEVFKYNR (81 aa)). Phosphotyrosine is present on tyrosine 104. Positions 113–373 (LRHTCKRIMD…TGDEPFQYKN (261 aa)) constitute a GS catalytic domain. Glutamate 134 is an ATP binding site. Mn(2+) is bound by residues glutamate 134, glutamate 136, glutamate 196, and glutamate 203. 203-208 (EFQIGP) provides a ligand contact to ATP. 246-247 (NW) contacts L-glutamate. Histidine 253 lines the Mn(2+) pocket. ATP-binding positions include 255–257 (NFS), arginine 319, and arginine 324. Arginine 319 lines the L-glutamate pocket. 336–338 (YFE) lines the ADP pocket. Glutamate 338 contributes to the Mn(2+) binding site. Arginine 340 contributes to the L-glutamate binding site. Phosphoserine is present on serine 343.

Belongs to the glutamine synthetase family. As to quaternary structure, decamer; composed of two pentamers. Interacts with PALMD. Interacts with RHOJ. Interacts with BEST2; this interaction tethers a fraction of GLUL to the membrane, causing a decrease of cytosolic glutamine synthase (GS) activity and inhibits the chloride channel activity of BEST2 by affecting the gating at the aperture in the absence of intracellular glutamate. Mg(2+) serves as cofactor. Mn(2+) is required as a cofactor. Post-translationally, palmitoylated; undergoes autopalmitoylation. Acetylated by EP300/p300; acetylation is stimulated by increased glutamine levels and promotes ubiquitin-mediated proteasomal degradation. In terms of processing, ubiquitinated by ZNRF1. Ubiquitinated by the DCX (DDB1-CUL4-X-box) E3 ubiquitin-protein ligase complex called CRL4(CRBN), leading to proteasomal degradation.

It is found in the cytoplasm. It localises to the cytosol. The protein localises to the microsome. The protein resides in the mitochondrion. Its subcellular location is the cell membrane. It catalyses the reaction L-glutamate + NH4(+) + ATP = L-glutamine + ADP + phosphate + H(+). The catalysed reaction is L-cysteinyl-[protein] + hexadecanoyl-CoA = S-hexadecanoyl-L-cysteinyl-[protein] + CoA. Glutamine synthetase activity is inhibited by methionine sulfoximine (MSO). Functionally, glutamine synthetase that catalyzes the ATP-dependent conversion of glutamate and ammonia to glutamine. Its role depends on tissue localization: in the brain, it regulates the levels of toxic ammonia and converts neurotoxic glutamate to harmless glutamine, whereas in the liver, it is one of the enzymes responsible for the removal of ammonia. Plays a key role in ammonium detoxification during erythropoiesis: the glutamine synthetase activity is required to remove ammonium generated by porphobilinogen deaminase (HMBS) during heme biosynthesis to prevent ammonium accumulation and oxidative stress. Essential for proliferation of fetal skin fibroblasts. Independently of its glutamine synthetase activity, required for endothelial cell migration during vascular development. Involved in angiogenesis by regulating membrane localization and activation of the GTPase RHOJ, possibly by promoting RHOJ palmitoylation. May act as a palmitoyltransferase for RHOJ: able to autopalmitoylate and then transfer the palmitoyl group to RHOJ. Plays a role in ribosomal 40S subunit biogenesis. Through the interaction with BEST2, inhibits BEST2 channel activity by affecting the gating at the aperture in the absence of intracellular L-glutamate, but sensitizes BEST2 to intracellular L-glutamate, which promotes the opening of BEST2 and thus relieves its inhibitory effect on BEST2. In Bos taurus (Bovine), this protein is Glutamine synthetase.